Consider the following 540-residue polypeptide: Chaperonin GroEL (540 aa).

ATP is bound by residues threonine 30–proline 33, aspartate 87–threonine 91, glycine 414, asparagine 479–leucine 481, and aspartate 495.

This sequence belongs to the chaperonin (HSP60) family. Forms a cylinder of 14 subunits composed of two heptameric rings stacked back-to-back. Interacts with the co-chaperonin GroES.

It localises to the cytoplasm. It catalyses the reaction ATP + H2O + a folded polypeptide = ADP + phosphate + an unfolded polypeptide.. Together with its co-chaperonin GroES, plays an essential role in assisting protein folding. The GroEL-GroES system forms a nano-cage that allows encapsulation of the non-native substrate proteins and provides a physical environment optimized to promote and accelerate protein folding. The sequence is that of Chaperonin GroEL from Rubrobacter xylanophilus (strain DSM 9941 / JCM 11954 / NBRC 16129 / PRD-1).